The sequence spans 819 residues: Metabotropic glutamate receptor-like protein O (819 aa).

An N-terminal signal peptide occupies residues 1-19; it reads MKKVFFLILILNCVVGALS. Over 20-394 the chain is Extracellular; the sequence is NKNICKISLL…FVDSYSNSIK (375 aa). N-linked (GlcNAc...) asparagine glycosylation is found at Asn-99, Asn-185, Asn-277, Asn-295, Asn-330, and Asn-370. A helical membrane pass occupies residues 395-415; sequence ISILSVSIFCIFICVLGMIFI. The Cytoplasmic segment spans residues 416-428; it reads TVLRNARILKSSS. The chain crosses the membrane as a helical span at residues 429–449; that stretch reads PSFLLLILFGCIVIFTGCILF. Topologically, residues 450-457 are extracellular; it reads SQPATDKT. A helical transmembrane segment spans residues 458-478; sequence CQGRVWLLSIGYTIFLGSLLI. Over 479-503 the chain is Cytoplasmic; that stretch reads KNWRVWLLFDNKKLRKRSITNWKLY. A helical transmembrane segment spans residues 504–524; the sequence is PWVAGILVVDVLILALWQGLG. At 525-550 the chain is on the extracellular side; sequence DIKSESRIIGTSFYQYTNVCTNNDQG. A helical membrane pass occupies residues 551 to 571; the sequence is SIALYILLAFHGLKLLGTCFI. Residues 572-587 lie on the Cytoplasmic side of the membrane; that stretch reads SFKIKLVDIEEFNESK. Residues 588-608 form a helical membrane-spanning segment; sequence PITTSVFIILFCIFTIILLIA. Over 609–624 the chain is Extracellular; sequence PSSSSSSASSPQPIAS. A helical membrane pass occupies residues 625 to 645; the sequence is LETIICICSVTTTAISIGLLF. Residues 646 to 819 lie on the Cytoplasmic side of the membrane; sequence GDKIYFITTQ…NNENEIISDT (174 aa). Positions 674-819 are disordered; sequence KDCDDDDDDS…NNENEIISDT (146 aa). Over residues 695-712 the composition is skewed to basic residues; sequence NKNKNKNRNQSEKKKRPN. The span at 726-739 shows a compositional bias: polar residues; that stretch reads ESVVFNPPSNNDLT. A compositionally biased stretch (basic and acidic residues) spans 748–768; that stretch reads GIKEGHGHDSENNDEYEHHED. Acidic residues predominate over residues 769–798; it reads EDHEYEGEGEDEDHEDEYEVENDIEQEQEQ. Residues 799 to 808 show a composition bias toward low complexity; the sequence is ESSNISISTK.

In the N-terminal section; belongs to the BMP lipoprotein family. It in the C-terminal section; belongs to the G-protein coupled receptor 3 family. GABA-B receptor subfamily.

Its subcellular location is the membrane. The protein is Metabotropic glutamate receptor-like protein O (grlO) of Dictyostelium discoideum (Social amoeba).